The chain runs to 190 residues: NADH-quinone oxidoreductase subunit B (190 aa).

The [4Fe-4S] cluster site is built by Cys39, Cys40, Cys104, and Cys135.

This sequence belongs to the complex I 20 kDa subunit family. In terms of assembly, NDH-1 is composed of 14 different subunits. Subunits NuoB, C, D, E, F, and G constitute the peripheral sector of the complex. [4Fe-4S] cluster is required as a cofactor.

The protein localises to the cell inner membrane. It carries out the reaction a quinone + NADH + 5 H(+)(in) = a quinol + NAD(+) + 4 H(+)(out). Its function is as follows. NDH-1 shuttles electrons from NADH, via FMN and iron-sulfur (Fe-S) centers, to quinones in the respiratory chain. The immediate electron acceptor for the enzyme in this species is believed to be a menaquinone. Couples the redox reaction to proton translocation (for every two electrons transferred, four hydrogen ions are translocated across the cytoplasmic membrane), and thus conserves the redox energy in a proton gradient. The protein is NADH-quinone oxidoreductase subunit B of Prosthecochloris aestuarii (strain DSM 271 / SK 413).